The following is a 325-amino-acid chain: Glucosyl-3-phosphoglycerate synthase (325 aa).

Residues 37–41 (PSLNE), Ser-71, Lys-104, and 124–125 (DS) contribute to the UDP-alpha-D-glucose site. Asp-126 lines the Mn(2+) pocket. 171–174 (GRVT) is a binding site for (2R)-3-phosphoglycerate. UDP-alpha-D-glucose is bound by residues 216 to 219 (YGVE) and 243 to 248 (RIHDNQ). His-245 serves as a coordination point for Mn(2+). Asn-247 serves as a coordination point for (2R)-3-phosphoglycerate.

It belongs to the glycosyltransferase 2 family. In terms of assembly, homodimer in solution. Requires Co(2+) as cofactor. Mg(2+) is required as a cofactor. It depends on Mn(2+) as a cofactor. Ni(2+) serves as cofactor. The cofactor is Zn(2+).

It carries out the reaction an NDP-alpha-D-glucose + (2R)-3-phosphoglycerate = (2R)-2-O-(alpha-D-glucopyranosyl)-3-phospho-glycerate + a ribonucleoside 5'-diphosphate + H(+). The catalysed reaction is (2R)-3-phosphoglycerate + UDP-alpha-D-glucose = (2R)-2-O-(alpha-D-glucopyranosyl)-3-phospho-glycerate + UDP + H(+). It catalyses the reaction ADP-alpha-D-glucose + (2R)-3-phosphoglycerate = (2R)-2-O-(alpha-D-glucopyranosyl)-3-phospho-glycerate + ADP + H(+). With respect to regulation, inhibited by ADP and EDTA. Involved in the biosynthesis of the compatible solute mannosylglucosylglycerate through a phosphorylating pathway. Catalyzes the transfer of the glucose moiety from a nuleotide sugar such as UDP-alpha-D-glucose to the position 2 of 3-phospho-D-glycerate (3-PGA) to form glucosyl-3-phosphoglycerate (GPG). UDP-glucose is the preferred substrate, but it can be partially replaced by ADP-glucose. The chain is Glucosyl-3-phosphoglycerate synthase from Petrotoga mobilis (strain DSM 10674 / SJ95).